We begin with the raw amino-acid sequence, 361 residues long: Chorismate synthase (361 aa).

NADP(+)-binding residues include arginine 48 and arginine 54. FMN is bound by residues 125–127 (RSS), 238–239 (NA), glycine 278, 293–297 (KPTSS), and arginine 319.

The protein belongs to the chorismate synthase family. As to quaternary structure, homotetramer. It depends on FMNH2 as a cofactor.

The enzyme catalyses 5-O-(1-carboxyvinyl)-3-phosphoshikimate = chorismate + phosphate. The protein operates within metabolic intermediate biosynthesis; chorismate biosynthesis; chorismate from D-erythrose 4-phosphate and phosphoenolpyruvate: step 7/7. Functionally, catalyzes the anti-1,4-elimination of the C-3 phosphate and the C-6 proR hydrogen from 5-enolpyruvylshikimate-3-phosphate (EPSP) to yield chorismate, which is the branch point compound that serves as the starting substrate for the three terminal pathways of aromatic amino acid biosynthesis. This reaction introduces a second double bond into the aromatic ring system. The polypeptide is Chorismate synthase (Vibrio campbellii (strain ATCC BAA-1116)).